The following is a 278-amino-acid chain: Coiled-coil domain-containing protein 106 (278 aa).

Residues 61-99 are a coiled coil; sequence AQLHLALERNSWLQKRIEDLEEERDFLRCQLDKFISSAR. Basic and acidic residues predominate over residues 102 to 119; the sequence is ADDHCRGKPGPRRAEGDG. The tract at residues 102–174 is disordered; the sequence is ADDHCRGKPG…KPKARERQRV (73 aa). Position 128 is a phosphoserine (S128). Over residues 131 to 144 the composition is skewed to low complexity; it reads ESAASSLSGASEEG. Residues 150–166 are compositionally biased toward basic residues; sequence KRQKQKGGPGRRRFGKP. The Bipartite nuclear localization signal motif lies at 151-164; it reads RQKQKGGPGRRRFG.

As to quaternary structure, interacts with p53/TP53.

It is found in the nucleus. Its function is as follows. Promotes the degradation of p53/TP53 protein and inhibits its transactivity. This chain is Coiled-coil domain-containing protein 106 (CCDC106), found in Bos taurus (Bovine).